The chain runs to 858 residues: MSAHAAPSPEALSRRAEFKAAKTEMLERFRRAANVASLMHALSKLTDEALKRVWDDCGLPATLALVAVGGYGRGELAPYSDVDILVLLPDAHDPALDARIERFIGMAWDLGLEIGSSVRTVAQCIEEASQDVTVQTSLLEARRIVGSTALFERFTVHYHEALDARAFFTAKVLEMRQRHAKFQDTPYSLEPNVKESPGGLRDLQTILWIARAAGFGSSWRELDTRGLITDREARELRRNEGFLKTLRARLHVIAGRRQDMLVFDLQTQAAESFGYEPTQAKRASEQLMRRYYWAAKAVTQLATILIQNIEAQLFPATSGITRVLSPDRFVEKQGMLEIVDDGVFERHPDAILEAFLLYETTRGVKGLSARTLRALYNSREIMNNTWRRDPQNRDTFMRILQQPEGITHAFRLMNQTSVLGRYLLNFRRIVGQMQHDLYHVYTVDQHILMVLRNIRRFAVAEHAHEYPFCSQLIGNFERPWVLYVAALFHDIAKGRGGDHSTLGMADARRFCREHGIASDDAALIVWLVQHHLTMSQVAQKQDTSDPEVIKRFAEVVGNERYLTALYLLTVADIRGTSPKVWNTWKGKLLEDLYRITLAVLGGANPDAHSELKSRQEQALALLRLETVPDDAHRTLWDQLDVGFFLRHDAADIAWQTRVLYRHVNAETAIVRARPSPIGDALQVLVYVKDRPDLFAGICAYFDRNGLSVLDARVSTTRHGYALDNFIVTQTERDVRYRDIANLVEQQLASRLTETAPLPEPSKGRLSRLSRTFPITPRVDLRADERGQYYILSVSANDRPGLLYSIARVLAEHRIGVHAARINTLGERVEDIFLLAGAGLSDNRLQIQLETELLRAIAV.

The uridylyltransferase stretch occupies residues 1-324 (MSAHAAPSPE…PATSGITRVL (324 aa)). Residues 325 to 681 (SPDRFVEKQG…ARPSPIGDAL (357 aa)) are uridylyl-removing. One can recognise an HD domain in the interval 443 to 565 (VDQHILMVLR…VGNERYLTAL (123 aa)). 2 consecutive ACT domains span residues 682–761 (QVLV…PEPS) and 790–858 (ILSV…AIAV).

Belongs to the GlnD family. The cofactor is Mg(2+).

It catalyses the reaction [protein-PII]-L-tyrosine + UTP = [protein-PII]-uridylyl-L-tyrosine + diphosphate. The catalysed reaction is [protein-PII]-uridylyl-L-tyrosine + H2O = [protein-PII]-L-tyrosine + UMP + H(+). Uridylyltransferase (UTase) activity is inhibited by glutamine, while glutamine activates uridylyl-removing (UR) activity. In terms of biological role, modifies, by uridylylation and deuridylylation, the PII regulatory proteins (GlnB and homologs), in response to the nitrogen status of the cell that GlnD senses through the glutamine level. Under low glutamine levels, catalyzes the conversion of the PII proteins and UTP to PII-UMP and PPi, while under higher glutamine levels, GlnD hydrolyzes PII-UMP to PII and UMP (deuridylylation). Thus, controls uridylylation state and activity of the PII proteins, and plays an important role in the regulation of nitrogen fixation and metabolism. The protein is Bifunctional uridylyltransferase/uridylyl-removing enzyme of Burkholderia lata (strain ATCC 17760 / DSM 23089 / LMG 22485 / NCIMB 9086 / R18194 / 383).